A 147-amino-acid polypeptide reads, in one-letter code: Probable 4-amino-4-deoxy-L-arabinose-phosphoundecaprenol flippase subunit ArnF (147 aa).

The Cytoplasmic segment spans residues 1–23; the sequence is MSNDHPQGQLPASPARSALKGYL. Residues 24–44 form a helical membrane-spanning segment; sequence YVLGSILLVTAAQLGMKWGVI. The Periplasmic portion of the chain corresponds to 45–62; sequence QLPTWQMDLAVMLAHPLP. The helical transmembrane segment at 63-83 threads the bilayer; sequence LLVILAGVGCYALSLLCWLAA. Residues 84 to 93 are Cytoplasmic-facing; that stretch reads LHSTPLNIAY. A helical transmembrane segment spans residues 94–114; sequence PLLSTSYALVYLLAVNIPLFA. Residues 115–121 are Periplasmic-facing; the sequence is EPLEPGK. The chain crosses the membrane as a helical span at residues 122–142; it reads ALGVLFILLGAVLVGIKPAAG. The Cytoplasmic portion of the chain corresponds to 143–147; the sequence is TKQTG.

It belongs to the ArnF family. Heterodimer of ArnE and ArnF.

It is found in the cell inner membrane. Its pathway is bacterial outer membrane biogenesis; lipopolysaccharide biosynthesis. In terms of biological role, translocates 4-amino-4-deoxy-L-arabinose-phosphoundecaprenol (alpha-L-Ara4N-phosphoundecaprenol) from the cytoplasmic to the periplasmic side of the inner membrane. The protein is Probable 4-amino-4-deoxy-L-arabinose-phosphoundecaprenol flippase subunit ArnF of Aeromonas hydrophila subsp. hydrophila (strain ATCC 7966 / DSM 30187 / BCRC 13018 / CCUG 14551 / JCM 1027 / KCTC 2358 / NCIMB 9240 / NCTC 8049).